A 60-amino-acid polypeptide reads, in one-letter code: uncharacterized protein (60 aa).

Residues 11 to 33 (VFTVGFITGGVTPVMVSFVWPAA) traverse the membrane as a helical segment. 2 N-linked (GlcNAc...) asparagine; by host glycosylation sites follow: Asn40 and Asn57.

It is found in the host membrane. This is an uncharacterized protein from African swine fever virus (strain Badajoz 1971 Vero-adapted) (Ba71V).